A 411-amino-acid chain; its full sequence is Diaminobutyrate--2-oxoglutarate transaminase (411 aa).

At K262 the chain carries N6-(pyridoxal phosphate)lysine.

Belongs to the class-III pyridoxal-phosphate-dependent aminotransferase family. Pyridoxal 5'-phosphate serves as cofactor.

The catalysed reaction is L-2,4-diaminobutanoate + 2-oxoglutarate = L-aspartate 4-semialdehyde + L-glutamate. Its pathway is amine and polyamine biosynthesis; ectoine biosynthesis; L-ectoine from L-aspartate 4-semialdehyde: step 1/3. Its function is as follows. Catalyzes reversively the conversion of L-aspartate beta-semialdehyde (ASA) to L-2,4-diaminobutyrate (DABA) by transamination with L-glutamate. This is Diaminobutyrate--2-oxoglutarate transaminase (ectB) from Vibrio cholerae serotype O1 (strain ATCC 39315 / El Tor Inaba N16961).